Here is a 160-residue protein sequence, read N- to C-terminus: Type IV major fimbrial protein FimA (160 aa).

The propeptide at 1 to 7 (MKSLQKG) is leader sequence. Residue Phe-8 is modified to N-methylphenylalanine. A helical transmembrane segment spans residues 8–28 (FTLIELMIVVAIIGILAAFAI). Residues Cys-63 and Cys-105 are joined by a disulfide bond.

Belongs to the N-Me-Phe pilin family. The pili are polar flexible filaments of about 5.4 nanometers diameter and 2.5 micrometers average length; they consist of only a single polypeptide chain arranged in a helical configuration of five subunits per turn in the assembled pilus.

It localises to the fimbrium. Its subcellular location is the membrane. Its function is as follows. Major component of the type IV fimbriae that plays an essential role in twitching motility, natural transformation, and protease secretion. This Dichelobacter nodosus (Bacteroides nodosus) protein is Type IV major fimbrial protein FimA (fimA).